Reading from the N-terminus, the 166-residue chain is Regulatory protein RecX (166 aa).

Belongs to the RecX family.

It localises to the cytoplasm. In terms of biological role, modulates RecA activity. This Shigella boydii serotype 18 (strain CDC 3083-94 / BS512) protein is Regulatory protein RecX.